A 679-amino-acid polypeptide reads, in one-letter code: Enzymatic polyprotein (679 aa).

A protease region spans residues 40-130; sequence LHCFVDTGAS…LYEPFIQFTD (91 aa). The active site involves Asp45. A Reverse transcriptase domain is found at 272 to 452; it reads LKVIKPSKSP…KKINFLGLEI (181 aa).

The protein belongs to the caulimoviridae enzymatic polyprotein family.

The enzyme catalyses DNA(n) + a 2'-deoxyribonucleoside 5'-triphosphate = DNA(n+1) + diphosphate. Its function is as follows. Encodes for at least two polypeptides: protease (PR) and reverse transcriptase (RT). The protease processes the polyprotein in cis. Reverse transcriptase is multifunctional enzyme that converts the viral RNA genome into dsDNA in viral cytoplasmic capsids. This enzyme displays a DNA polymerase activity that can copy either DNA or RNA templates, and a ribonuclease H (RNase H) activity that cleaves the RNA strand of RNA-DNA heteroduplexes in a partially processive 3'- to 5'-endonucleasic mode. Neo-synthesized pregenomic RNA (pgRNA) are encapsidated, and reverse-transcribed inside the nucleocapsid. Partial (+)DNA is synthesized from the (-)DNA template and generates the relaxed circular DNA (RC-DNA) genome. After budding and infection, the RC-DNA migrates in the nucleus, and is converted into a plasmid-like covalently closed circular DNA (cccDNA). In Arabidopsis thaliana (Mouse-ear cress), this protein is Enzymatic polyprotein.